The following is a 62-amino-acid chain: Inner membrane protein p12 (62 aa).

Residues leucine 16 to methionine 36 form a helical membrane-spanning segment.

It belongs to the asfivirus inner membrane protein p12 family. As to quaternary structure, homomultimer; disulfide-linked. In terms of processing, not glycosylated.

It is found in the virion membrane. The sequence is that of Inner membrane protein p12 from African swine fever virus (isolate Pig/Kenya/KEN-50/1950) (ASFV).